Reading from the N-terminus, the 365-residue chain is Class I histocompatibility antigen, Gogo-A*0501 alpha chain (365 aa).

Residues 1-24 (MAVVAPRTLLLLLSGALALTQTWA) form the signal peptide. The interval 25-114 (GSHSMRYFST…ALRYYNQSED (90 aa)) is alpha-1. At 25-308 (GSHSMRYFST…EPSSQPTIPI (284 aa)) the chain is on the extracellular side. N110 carries N-linked (GlcNAc...) asparagine glycosylation. The segment at 115–206 (GSHTIQRMYG…ENGKETLQRT (92 aa)) is alpha-2. 2 disulfides stabilise this stretch: C125-C188 and C227-C283. An alpha-3 region spans residues 207–298 (DAPKTHTTHQ…GLPKPLTLRW (92 aa)). Residues 209–295 (PKTHTTHQAV…QHEGLPKPLT (87 aa)) enclose the Ig-like C1-type domain. The connecting peptide stretch occupies residues 299-308 (EPSSQPTIPI). Residues 309-332 (VGIIAGLVLFGAVIAGAVVAAVRW) form a helical membrane-spanning segment. The Cytoplasmic segment spans residues 333–365 (RRKSSDRKGGSYSQAASSDSAQGSDVSLTACKV). The segment at 338–365 (DRKGGSYSQAASSDSAQGSDVSLTACKV) is disordered. Residues 342-359 (GSYSQAASSDSAQGSDVS) show a composition bias toward low complexity. Phosphoserine is present on S343. Position 344 is a phosphotyrosine (Y344). S345, S349, S352, S356, and S359 each carry phosphoserine.

It belongs to the MHC class I family. As to quaternary structure, heterodimer of an alpha chain and a beta chain (beta-2-microglobulin).

The protein resides in the membrane. Functionally, involved in the presentation of foreign antigens to the immune system. This Gorilla gorilla gorilla (Western lowland gorilla) protein is Class I histocompatibility antigen, Gogo-A*0501 alpha chain.